A 464-amino-acid polypeptide reads, in one-letter code: Aspartyl protease AED1 (464 aa).

A signal peptide spans 1–25 (MSIMRNFLSMIIMLCVCLNWCFAEG). The 329-residue stretch at 132–460 (YIVTIGIGTP…DVAGGRVGFA (329 aa)) folds into the Peptidase A1 domain. Active-site residues include Asp-150 and Asp-345. Cys-384 and Cys-425 are oxidised to a cystine.

It belongs to the peptidase A1 family.

It is found in the secreted. The protein localises to the extracellular space. Its subcellular location is the apoplast. In terms of biological role, aspartyl protease involved in a homeostatic feedback mechanism regulating systemic immunity. Has only mild or no influence on local defenses. Acts downstream of salicylic acid to suppress systemic immunity. This chain is Aspartyl protease AED1, found in Arabidopsis thaliana (Mouse-ear cress).